A 26-amino-acid polypeptide reads, in one-letter code: Dermaseptin-J1 (26 aa).

A Valine amide modification is found at valine 26.

As to expression, expressed by the skin glands.

The protein localises to the secreted. In terms of biological role, has antimicrobial activity. The sequence is that of Dermaseptin-J1 from Phasmahyla jandaia (Jandaia leaf frog).